We begin with the raw amino-acid sequence, 40 residues long: Photosystem II reaction center protein J (40 aa).

A helical membrane pass occupies residues 8 to 28 (IPLWLVATVAGLAAIGVLGIF).

This sequence belongs to the PsbJ family. In terms of assembly, PSII is composed of 1 copy each of membrane proteins PsbA, PsbB, PsbC, PsbD, PsbE, PsbF, PsbH, PsbI, PsbJ, PsbK, PsbL, PsbM, PsbT, PsbX, PsbY, PsbZ, Psb30/Ycf12, at least 3 peripheral proteins of the oxygen-evolving complex and a large number of cofactors. It forms dimeric complexes.

The protein localises to the plastid. Its subcellular location is the cyanelle thylakoid membrane. Its function is as follows. One of the components of the core complex of photosystem II (PSII). PSII is a light-driven water:plastoquinone oxidoreductase that uses light energy to abstract electrons from H(2)O, generating O(2) and a proton gradient subsequently used for ATP formation. It consists of a core antenna complex that captures photons, and an electron transfer chain that converts photonic excitation into a charge separation. This is Photosystem II reaction center protein J from Cyanophora paradoxa.